The chain runs to 307 residues: Ornithine carbamoyltransferase (307 aa).

Carbamoyl phosphate is bound by residues 53-56, Q80, R104, and 131-134; these read STRT and HPCQ. L-ornithine-binding positions include N162, D219, and 223-224; that span reads SM. Carbamoyl phosphate-binding positions include 259-260 and R287; that span reads CL.

It belongs to the aspartate/ornithine carbamoyltransferase superfamily. OTCase family.

Its subcellular location is the cytoplasm. It catalyses the reaction carbamoyl phosphate + L-ornithine = L-citrulline + phosphate + H(+). Its pathway is amino-acid biosynthesis; L-arginine biosynthesis; L-arginine from L-ornithine and carbamoyl phosphate: step 1/3. In terms of biological role, reversibly catalyzes the transfer of the carbamoyl group from carbamoyl phosphate (CP) to the N(epsilon) atom of ornithine (ORN) to produce L-citrulline. In Psychrobacter arcticus (strain DSM 17307 / VKM B-2377 / 273-4), this protein is Ornithine carbamoyltransferase.